The following is a 433-amino-acid chain: tRNA-queuosine alpha-mannosyltransferase (433 aa).

Positions 194 to 244 are disordered; the sequence is PAAKSHIQTSSPSSYPDVEPPEKMLNVAGTNQSHEPTSVTPHQETASPLCG. Positions 221–239 are enriched in polar residues; that stretch reads AGTNQSHEPTSVTPHQETA.

Belongs to the glycosyltransferase group 1 family. Glycosyltransferase 4 subfamily.

The protein localises to the cytoplasm. It localises to the nucleus. The catalysed reaction is queuosine(34) in tRNA(Asp) + GDP-alpha-D-mannose = O-4''-alpha-D-mannosylqueuosine(34) in tRNA(Asp) + GDP + H(+). Functionally, glycosyltransferase that specifically catalyzes mannosylation of cytoplasmic tRNA(Asp) modified with queuosine at position 34 (queuosine(34)). Mannosylates the cyclopentene moiety of queuosine(34) in tRNA(Asp) to form mannosyl-queuosine(34). Mannosylation of queuosine(34) in tRNA(Asp) is required to slow-down elongation at cognate codons, GAC and GAU, thereby regulating protein translation. The chain is tRNA-queuosine alpha-mannosyltransferase (gtdc1) from Danio rerio (Zebrafish).